We begin with the raw amino-acid sequence, 194 residues long: ATP-dependent Clp protease proteolytic subunit (194 aa).

The active-site Nucleophile is the serine 97. Residue histidine 122 is part of the active site.

It belongs to the peptidase S14 family. As to quaternary structure, fourteen ClpP subunits assemble into 2 heptameric rings which stack back to back to give a disk-like structure with a central cavity, resembling the structure of eukaryotic proteasomes.

The protein localises to the cytoplasm. It catalyses the reaction Hydrolysis of proteins to small peptides in the presence of ATP and magnesium. alpha-casein is the usual test substrate. In the absence of ATP, only oligopeptides shorter than five residues are hydrolyzed (such as succinyl-Leu-Tyr-|-NHMec, and Leu-Tyr-Leu-|-Tyr-Trp, in which cleavage of the -Tyr-|-Leu- and -Tyr-|-Trp bonds also occurs).. Cleaves peptides in various proteins in a process that requires ATP hydrolysis. Has a chymotrypsin-like activity. Plays a major role in the degradation of misfolded proteins. This Lactobacillus helveticus (strain DPC 4571) protein is ATP-dependent Clp protease proteolytic subunit.